The chain runs to 209 residues: Ribosomal RNA large subunit methyltransferase E (209 aa).

Residues Gly63, Trp65, Asp83, Asp99, and Asp124 each coordinate S-adenosyl-L-methionine. Residue Lys164 is the Proton acceptor of the active site.

The protein belongs to the class I-like SAM-binding methyltransferase superfamily. RNA methyltransferase RlmE family.

It is found in the cytoplasm. The enzyme catalyses uridine(2552) in 23S rRNA + S-adenosyl-L-methionine = 2'-O-methyluridine(2552) in 23S rRNA + S-adenosyl-L-homocysteine + H(+). Functionally, specifically methylates the uridine in position 2552 of 23S rRNA at the 2'-O position of the ribose in the fully assembled 50S ribosomal subunit. This is Ribosomal RNA large subunit methyltransferase E from Aliivibrio fischeri (strain ATCC 700601 / ES114) (Vibrio fischeri).